The following is a 292-amino-acid chain: ATP synthase gamma chain (292 aa).

The protein belongs to the ATPase gamma chain family. F-type ATPases have 2 components, CF(1) - the catalytic core - and CF(0) - the membrane proton channel. CF(1) has five subunits: alpha(3), beta(3), gamma(1), delta(1), epsilon(1). CF(0) has three main subunits: a, b and c.

The protein localises to the cell inner membrane. Its function is as follows. Produces ATP from ADP in the presence of a proton gradient across the membrane. The gamma chain is believed to be important in regulating ATPase activity and the flow of protons through the CF(0) complex. This is ATP synthase gamma chain from Nautilia profundicola (strain ATCC BAA-1463 / DSM 18972 / AmH).